Reading from the N-terminus, the 274-residue chain is Rhamnulose-1-phosphate aldolase (274 aa).

Residue Glu-117 is part of the active site. Zn(2+) contacts are provided by His-141, His-143, and His-212.

Belongs to the aldolase class II family. RhaD subfamily. Homotetramer. The cofactor is Zn(2+).

It localises to the cytoplasm. It catalyses the reaction L-rhamnulose 1-phosphate = (S)-lactaldehyde + dihydroxyacetone phosphate. Its pathway is carbohydrate degradation; L-rhamnose degradation; glycerone phosphate from L-rhamnose: step 3/3. In terms of biological role, catalyzes the reversible cleavage of L-rhamnulose-1-phosphate to dihydroxyacetone phosphate (DHAP) and L-lactaldehyde. This Escherichia coli (strain SMS-3-5 / SECEC) protein is Rhamnulose-1-phosphate aldolase.